A 284-amino-acid chain; its full sequence is 4-diphosphocytidyl-2-C-methyl-D-erythritol kinase (284 aa).

The active site involves K14. 98–108 lines the ATP pocket; the sequence is PMGGGLGGGSS. The active site involves D140.

Belongs to the GHMP kinase family. IspE subfamily.

The catalysed reaction is 4-CDP-2-C-methyl-D-erythritol + ATP = 4-CDP-2-C-methyl-D-erythritol 2-phosphate + ADP + H(+). It participates in isoprenoid biosynthesis; isopentenyl diphosphate biosynthesis via DXP pathway; isopentenyl diphosphate from 1-deoxy-D-xylulose 5-phosphate: step 3/6. Catalyzes the phosphorylation of the position 2 hydroxy group of 4-diphosphocytidyl-2C-methyl-D-erythritol. The sequence is that of 4-diphosphocytidyl-2-C-methyl-D-erythritol kinase from Shewanella denitrificans (strain OS217 / ATCC BAA-1090 / DSM 15013).